We begin with the raw amino-acid sequence, 269 residues long: Shikimate dehydrogenase (NADP(+)) (269 aa).

Shikimate contacts are provided by residues 14-16 (SVS) and Thr61. Lys65 acts as the Proton acceptor in catalysis. Residues Asn85 and Asp98 each coordinate shikimate. Residues 120 to 124 (GAGGA), 143 to 148 (NRTEEK), and Thr211 each bind NADP(+). Tyr213 lines the shikimate pocket. Gly234 is an NADP(+) binding site.

The protein belongs to the shikimate dehydrogenase family. As to quaternary structure, homodimer.

The catalysed reaction is shikimate + NADP(+) = 3-dehydroshikimate + NADPH + H(+). Its pathway is metabolic intermediate biosynthesis; chorismate biosynthesis; chorismate from D-erythrose 4-phosphate and phosphoenolpyruvate: step 4/7. In terms of biological role, involved in the biosynthesis of the chorismate, which leads to the biosynthesis of aromatic amino acids. Catalyzes the reversible NADPH linked reduction of 3-dehydroshikimate (DHSA) to yield shikimate (SA). The polypeptide is Shikimate dehydrogenase (NADP(+)) (Archaeoglobus fulgidus (strain ATCC 49558 / DSM 4304 / JCM 9628 / NBRC 100126 / VC-16)).